The primary structure comprises 270 residues: Type III pantothenate kinase (270 aa).

6-13 (DVRNTHTV) provides a ligand contact to ATP. Residue 109–112 (GADR) participates in substrate binding. D111 (proton acceptor) is an active-site residue. D131 contributes to the K(+) binding site. S134 contacts ATP. Position 186 (T186) interacts with substrate.

Belongs to the type III pantothenate kinase family. In terms of assembly, homodimer. The cofactor is NH4(+). It depends on K(+) as a cofactor.

Its subcellular location is the cytoplasm. The catalysed reaction is (R)-pantothenate + ATP = (R)-4'-phosphopantothenate + ADP + H(+). It functions in the pathway cofactor biosynthesis; coenzyme A biosynthesis; CoA from (R)-pantothenate: step 1/5. In terms of biological role, catalyzes the phosphorylation of pantothenate (Pan), the first step in CoA biosynthesis. This chain is Type III pantothenate kinase, found in Mycolicibacterium gilvum (strain PYR-GCK) (Mycobacterium gilvum (strain PYR-GCK)).